The primary structure comprises 480 residues: ATP synthase subunit beta (480 aa).

166 to 173 contributes to the ATP binding site; it reads GGAGVGKT.

The protein belongs to the ATPase alpha/beta chains family. As to quaternary structure, F-type ATPases have 2 components, CF(1) - the catalytic core - and CF(0) - the membrane proton channel. CF(1) has five subunits: alpha(3), beta(3), gamma(1), delta(1), epsilon(1). CF(0) has three main subunits: a(1), b(2) and c(9-12). The alpha and beta chains form an alternating ring which encloses part of the gamma chain. CF(1) is attached to CF(0) by a central stalk formed by the gamma and epsilon chains, while a peripheral stalk is formed by the delta and b chains.

The protein localises to the cell membrane. It catalyses the reaction ATP + H2O + 4 H(+)(in) = ADP + phosphate + 5 H(+)(out). Functionally, produces ATP from ADP in the presence of a proton gradient across the membrane. The catalytic sites are hosted primarily by the beta subunits. The protein is ATP synthase subunit beta of Streptomyces griseus subsp. griseus (strain JCM 4626 / CBS 651.72 / NBRC 13350 / KCC S-0626 / ISP 5235).